The sequence spans 223 residues: Charged multivesicular body protein 3 (223 aa).

A lipid anchor (N-myristoyl glycine) is attached at Gly2. Residues 2–113 are intramolecular interaction with C-terminus; sequence GLFGKTQEKP…LQKSTEVMKA (112 aa). Residues 22 to 54 adopt a coiled-coil conformation; it reads KIRKEMRVVDRQIRDIQREEEKVKRSVKDAAKK. 2 important for autoinhibitory function regions span residues 59–64 and 168–169; these read VCVVLA and IL. A coiled-coil region spans residues 149–223; that stretch reads ESMDDQEEME…MQSRLATLRS (75 aa). The intramolecular interaction with N-terminus stretch occupies residues 151–221; it reads MDDQEEMEEA…EAMQSRLATL (71 aa). An interaction with VPS4A region spans residues 151 to 223; the sequence is MDDQEEMEEA…MQSRLATLRS (73 aa). Lys179 participates in a covalent cross-link: Glycyl lysine isopeptide (Lys-Gly) (interchain with G-Cter in ubiquitin). The disordered stretch occupies residues 180-223; sequence APSKVTDALPEPEPAGAMAASEGDEEDDEEDLEAMQSRLATLRS. Interaction with STAMBP regions lie at residues 196–223, 204–208, and 222–223; these read AMAA…TLRS, EEDDE, and RS. Ser200 carries the post-translational modification Phosphoserine. The short motif at 201-212 is the MIT-interacting motif element; it reads EGDEEDDEEDLE. Positions 201–212 are enriched in acidic residues; the sequence is EGDEEDDEEDLE.

It belongs to the SNF7 family. Probable core component of the endosomal sorting required for transport complex III (ESCRT-III). ESCRT-III components are thought to multimerize to form a flat lattice on the perimeter membrane of the endosome. Several assembly forms of ESCRT-III may exist that interact and act sequentially. Forms a metastable monomer in solution; its core structure (without part of the putative autoinhibitory C-terminal acidic region) oligomerizes into a flat lattice via two different dimerization interfaces. In vitro, heteromerizes with CHMP2A (but not CHMP4) to form helical tubular structures that expose membrane-interacting sites on the outside whereas VPS4B can associate on the inside of the tubule. May interact with IGFBP7; the relevance of such interaction however remains unclear. Interacts with CHMP2A. Interacts with CHMP4A; the interaction requires the release of CHMP4A autoinhibition. Interacts with VPS4A. Interacts with STAMBP; the interaction appears to relieve the autoinhibition of CHMP3. Interacts with VTA1.

The protein resides in the cytoplasm. Its subcellular location is the cytosol. It is found in the membrane. The protein localises to the endosome. It localises to the late endosome membrane. In terms of biological role, probable core component of the endosomal sorting required for transport complex III (ESCRT-III) which is involved in multivesicular bodies (MVBs) formation and sorting of endosomal cargo proteins into MVBs. MVBs contain intraluminal vesicles (ILVs) that are generated by invagination and scission from the limiting membrane of the endosome and mostly are delivered to lysosomes enabling degradation of membrane proteins, such as stimulated growth factor receptors, lysosomal enzymes and lipids. The MVB pathway appears to require the sequential function of ESCRT-O, -I,-II and -III complexes. ESCRT-III proteins mostly dissociate from the invaginating membrane before the ILV is released. The ESCRT machinery also functions in topologically equivalent membrane fission events, such as the terminal stages of cytokinesis. ESCRT-III proteins are believed to mediate the necessary vesicle extrusion and/or membrane fission activities, possibly in conjunction with the AAA ATPase VPS4. Selectively binds to phosphatidylinositol 3,5-bisphosphate PtdIns(3,5)P2 and PtdIns(3,4)P2 in preference to other phosphoinositides tested. Involved in late stages of cytokinesis. Plays a role in endosomal sorting/trafficking of EGF receptor. This chain is Charged multivesicular body protein 3 (Chmp3), found in Rattus norvegicus (Rat).